A 1186-amino-acid polypeptide reads, in one-letter code: Chromosome partition protein Smc (1186 aa).

32–39 (PNGSGKSN) is an ATP binding site. 2 coiled-coil regions span residues 167–206 (VLKY…EPLK) and 259–481 (SSAI…QAYQ). The region spanning 519-637 (GIRGAVLELI…EDLKGANELA (119 aa)) is the SMC hinge domain. 3 coiled-coil regions span residues 672 to 864 (LLGR…MSSS), 893 to 943 (RDQR…NLLQ), and 990 to 1029 (SIDE…DEEM).

The protein belongs to the SMC family. As to quaternary structure, homodimer.

Its subcellular location is the cytoplasm. Its function is as follows. Required for chromosome condensation and partitioning. In Bacillus subtilis (strain 168), this protein is Chromosome partition protein Smc.